We begin with the raw amino-acid sequence, 355 residues long: Beta-1,2-mannobiose phosphorylase (355 aa).

Beta-D-Manp-(1-&gt;2)-beta-D-Manp-(1-&gt;2)-D-Manp contacts are provided by residues Asn-31, Arg-46, Arg-89, 140–141, Lys-188, Tyr-273, and Asp-333; that span reads ED.

Belongs to the glycosyl hydrolase 130 family. In terms of assembly, homodimer.

It carries out the reaction beta-D-mannopyranosyl-(1-&gt;2)-D-mannopyranose + phosphate = alpha-D-mannose 1-phosphate + D-mannose. Functionally, catalyzes the reversible phosphorolysis of 1,2-beta-oligomannan. In phosphorolytic reactions, prefers beta-1,2-mannobiose (beta-1,2-Man2) as substrate, but can also use beta-1,2-mannotriose. The chain is Beta-1,2-mannobiose phosphorylase from Listeria innocua serovar 6a (strain ATCC BAA-680 / CLIP 11262).